We begin with the raw amino-acid sequence, 579 residues long: Zinc metalloproteinase nas-11 (579 aa).

The first 17 residues, 1–17 (MTPSLVFLIVVIVVVEG), serve as a signal peptide directing secretion. Residues 18 to 328 (QGWRPWDRFN…AAPGSSRLKK (311 aa)) constitute a propeptide that is removed on maturation. The tract at residues 35 to 58 (WGGNNWGTRQRNQEPHDIPPPVPP) is disordered. N-linked (GlcNAc...) asparagine glycosylation occurs at Asn-256. The segment covering 293–312 (GDDEIPLPDADTDDEDDDDS) has biased composition (acidic residues). The tract at residues 293 to 323 (GDDEIPLPDADTDDEDDDDSTNSASGAAPGS) is disordered. The region spanning 329–536 (SALYFEGNLI…IELLKKMYCQ (208 aa)) is the Peptidase M12A domain. Cystine bridges form between Cys-375-Cys-535, Cys-401-Cys-421, Cys-539-Cys-575, Cys-546-Cys-568, and Cys-555-Cys-572. His-430 is a Zn(2+) binding site. The active site involves Glu-431. Positions 434 and 440 each coordinate Zn(2+). N-linked (GlcNAc...) asparagine glycosylation occurs at Asn-454. The ShKT domain occupies 539-575 (CDDKNVYCGAWALKDLCKNPGHDQYMAANCKKSCGLC).

Requires Zn(2+) as cofactor. Expressed in the anterior part of the intestine, CEP neurons and to a lesser extent in hypodermis.

It localises to the secreted. Metalloprotease. The sequence is that of Zinc metalloproteinase nas-11 (nas-11) from Caenorhabditis elegans.